Reading from the N-terminus, the 154-residue chain is Immunity protein YwqK (154 aa).

Probably interacts with cognate toxin YwqJ but not with other non-cognate LXG toxins. The interaction inhibits the toxic activity of YwqJ.

Its subcellular location is the cytoplasm. Functionally, immunity component of one of 6 LXG toxin-immunity modules in this strain. They promote kin selection, mediate competition in biofilms, and drive spatial segregation of different strains, indicating that LXG toxins may help avoid warfare between strains in biofilms. Mediates intercellular competition during biofilm formation; disruption of the operon disadvantages the bacteria, but overexpression of the cognate immunity protein restores growth in competition with wild-type. In situ neutralizes the toxic effect of cognate toxin YqcG. Probably neutralizes the ability to inhibit growth of cognate toxin YwqJ. Probably does not have immunity protein activity on other LXG toxins. The chain is Immunity protein YwqK (ywqK) from Bacillus subtilis (strain 168).